Here is a 140-residue protein sequence, read N- to C-terminus: Transcription antitermination protein NusB (140 aa).

This sequence belongs to the NusB family.

In terms of biological role, involved in transcription antitermination. Required for transcription of ribosomal RNA (rRNA) genes. Binds specifically to the boxA antiterminator sequence of the ribosomal RNA (rrn) operons. The protein is Transcription antitermination protein NusB of Streptococcus pneumoniae (strain 70585).